Here is a 790-residue protein sequence, read N- to C-terminus: Ribosome biogenesis protein ERB1 (790 aa).

Residues 1 to 93 (MAKKNTVTGS…SDELQDDSNS (93 aa)) form a disordered region. Over residues 20 to 89 (SPEVSESEEI…SEDFSDELQD (70 aa)) the composition is skewed to acidic residues. Residues 255–371 (RFVPSKHEAK…LRKVPAYQEN (117 aa)) are required for interaction with NOP7. The tract at residues 371–407 (NLRERFERSLDLYLAPRVRHNKLNIDPDSLIPDLPSP) is required for interaction with YTM1. WD repeat units follow at residues 423–462 (GHIGRVRTLSIDPSGLWLATGGDDGTVRVWEILTGRQVYH), 470–510 (KDDD…YEIE), 574–616 (QCRK…SQSP), 619–657 (KSKGIIVDAKFHPFKPQLFVASQRSIKIYDLSQQVLTKK), 660–699 (PGARYLSGIDIHPRGDHLLASSYDKRVLWHDLDLSNTPYK), 703–743 (YHEK…DLMT), and 759–790 (VHSLGVLDLVWHPKEAWLFTAGADGTARLWTT).

This sequence belongs to the WD repeat BOP1/ERB1 family. As to quaternary structure, component of the NOP7 complex, composed of ERB1, NOP7 and YTM1. The complex is held together by ERB1, which interacts with NOP7 via its N-terminal domain and with YTM1 via a high-affinity interaction between the seven-bladed beta-propeller domains of the 2 proteins. The NOP7 complex associates with the 66S pre-ribosome.

The protein resides in the nucleus. It localises to the nucleolus. It is found in the nucleoplasm. Component of the NOP7 complex, which is required for maturation of the 25S and 5.8S ribosomal RNAs and formation of the 60S ribosome. The polypeptide is Ribosome biogenesis protein ERB1 (Meyerozyma guilliermondii (strain ATCC 6260 / CBS 566 / DSM 6381 / JCM 1539 / NBRC 10279 / NRRL Y-324) (Yeast)).